A 231-amino-acid chain; its full sequence is Insertion sequence IS1162 putative ATP-binding protein (231 aa).

107 to 114 (GPTGVGKT) contributes to the ATP binding site.

Belongs to the IS21/IS1162 putative ATP-binding protein family.

This chain is Insertion sequence IS1162 putative ATP-binding protein, found in Pseudomonas fluorescens.